Here is a 333-residue protein sequence, read N- to C-terminus: Holliday junction branch migration complex subunit RuvB (333 aa).

The tract at residues 4 to 185 is large ATPase domain (RuvB-L); sequence IDRLVSTDVL…FGIVQRLEFY (182 aa). ATP is bound by residues I24, R25, G66, K69, T70, T71, 132–134, R175, Y185, and R222; that span reads EDY. Residue T70 coordinates Mg(2+). The interval 186 to 256 is small ATPAse domain (RuvB-S); it reads SVPDLEHIVS…IAIKALEMLN (71 aa). Residues 259 to 333 are head domain (RuvB-H); that stretch reads KEGLDYMDSK…HAYQHFICGG (75 aa). Positions 295, 314, and 319 each coordinate DNA.

The protein belongs to the RuvB family. As to quaternary structure, homohexamer. Forms an RuvA(8)-RuvB(12)-Holliday junction (HJ) complex. HJ DNA is sandwiched between 2 RuvA tetramers; dsDNA enters through RuvA and exits via RuvB. An RuvB hexamer assembles on each DNA strand where it exits the tetramer. Each RuvB hexamer is contacted by two RuvA subunits (via domain III) on 2 adjacent RuvB subunits; this complex drives branch migration. In the full resolvosome a probable DNA-RuvA(4)-RuvB(12)-RuvC(2) complex forms which resolves the HJ.

The protein resides in the cytoplasm. It carries out the reaction ATP + H2O = ADP + phosphate + H(+). Its function is as follows. The RuvA-RuvB-RuvC complex processes Holliday junction (HJ) DNA during genetic recombination and DNA repair, while the RuvA-RuvB complex plays an important role in the rescue of blocked DNA replication forks via replication fork reversal (RFR). RuvA specifically binds to HJ cruciform DNA, conferring on it an open structure. The RuvB hexamer acts as an ATP-dependent pump, pulling dsDNA into and through the RuvAB complex. RuvB forms 2 homohexamers on either side of HJ DNA bound by 1 or 2 RuvA tetramers; 4 subunits per hexamer contact DNA at a time. Coordinated motions by a converter formed by DNA-disengaged RuvB subunits stimulates ATP hydrolysis and nucleotide exchange. Immobilization of the converter enables RuvB to convert the ATP-contained energy into a lever motion, pulling 2 nucleotides of DNA out of the RuvA tetramer per ATP hydrolyzed, thus driving DNA branch migration. The RuvB motors rotate together with the DNA substrate, which together with the progressing nucleotide cycle form the mechanistic basis for DNA recombination by continuous HJ branch migration. Branch migration allows RuvC to scan DNA until it finds its consensus sequence, where it cleaves and resolves cruciform DNA. This Hamiltonella defensa subsp. Acyrthosiphon pisum (strain 5AT) protein is Holliday junction branch migration complex subunit RuvB.